The chain runs to 249 residues: Green-light absorbing proteorhodopsin (249 aa).

Residues 1–17 form the signal peptide; it reads MKLLLILGSVIALPTFA. Transmembrane regions (helical) follow at residues 30 to 49, 62 to 84, 99 to 121, 128 to 147, 151 to 168, 189 to 211, and 221 to 243; these read GVSFWLVTAALLASTVFFFV, LTVSGLVTGIAFWHYMYMRGVWI, LLTVPLLICEFYLILAAATNVAG, LVGSLVMLVFGYMGEAGIMA, AFIIGCLAWVYMIYELWA, MMYIIIFGWAIYPVGYFTGYLMG, and LIYNLADFVNKILFGLIIWNVAV. Lys-231 is modified (N6-(retinylidene)lysine).

Belongs to the archaeal/bacterial/fungal opsin family. In terms of processing, contains one covalently linked retinal chromophore.

The protein resides in the cell membrane. Light-driven proton pump that generates photothrophic energy. This chain is Green-light absorbing proteorhodopsin, found in Gamma-proteobacterium EBAC31A08.